A 378-amino-acid chain; its full sequence is Mas-related G-protein coupled receptor MRG (378 aa).

Residues 1–77 are Extracellular-facing; it reads MVWGKICWFS…VGQQALPLNI (77 aa). Residues N54 and N57 are each glycosylated (N-linked (GlcNAc...) asparagine). The helical transmembrane segment at 78–101 threads the bilayer; the sequence is IAPKAVLVSLCGVLLNGTVFWLLC. Topologically, residues 102-109 are cytoplasmic; the sequence is CGATNPYM. Residues 110–136 traverse the membrane as a helical segment; the sequence is VYILHLVAADVIYLCCSAVGFLQVTLL. Residues 137–154 lie on the Extracellular side of the membrane; sequence TYHGVVFFIPDFLAILSP. The helical transmembrane segment at 155–169 threads the bilayer; that stretch reads FSFEVCLCLLVAIST. Residues 170-191 lie on the Cytoplasmic side of the membrane; the sequence is ERCVCVLFPIWYRCHRPKYTSN. Residues 192 to 207 form a helical membrane-spanning segment; that stretch reads VVCTLIWGLPFCINIV. The Extracellular segment spans residues 208–221; the sequence is KSLFLTYWKHVKAC. The helical transmembrane segment at 222–248 threads the bilayer; it reads VIFLKLSGLFHAILSLVMCVSSLTLLI. Residues 249–264 are Cytoplasmic-facing; sequence RFLCCSQQQKATRVYA. Residues 265 to 286 traverse the membrane as a helical segment; sequence VVQISAPMFLLWALPLSVAPLI. Topologically, residues 287–297 are extracellular; it reads TDFKMFVTTSY. A helical membrane pass occupies residues 298-317; sequence LISLFLIINSSANPIIYFFV. Topologically, residues 318–378 are cytoplasmic; it reads GSLRKKRLKE…PREHRVDVET (61 aa). The disordered stretch occupies residues 344 to 378; the sequence is GRNKKAAGIDPMEQPHSTQHVENLLPREHRVDVET. Basic and acidic residues predominate over residues 368 to 378; it reads LPREHRVDVET.

It belongs to the G-protein coupled receptor 1 family. Mas subfamily.

It localises to the cell membrane. This Homo sapiens (Human) protein is Mas-related G-protein coupled receptor MRG (MAS1L).